We begin with the raw amino-acid sequence, 233 residues long: Leucyl/phenylalanyl-tRNA--protein transferase (233 aa).

It belongs to the L/F-transferase family.

The protein localises to the cytoplasm. It catalyses the reaction N-terminal L-lysyl-[protein] + L-leucyl-tRNA(Leu) = N-terminal L-leucyl-L-lysyl-[protein] + tRNA(Leu) + H(+). The catalysed reaction is N-terminal L-arginyl-[protein] + L-leucyl-tRNA(Leu) = N-terminal L-leucyl-L-arginyl-[protein] + tRNA(Leu) + H(+). It carries out the reaction L-phenylalanyl-tRNA(Phe) + an N-terminal L-alpha-aminoacyl-[protein] = an N-terminal L-phenylalanyl-L-alpha-aminoacyl-[protein] + tRNA(Phe). Functionally, functions in the N-end rule pathway of protein degradation where it conjugates Leu, Phe and, less efficiently, Met from aminoacyl-tRNAs to the N-termini of proteins containing an N-terminal arginine or lysine. This Laribacter hongkongensis (strain HLHK9) protein is Leucyl/phenylalanyl-tRNA--protein transferase.